The following is a 365-amino-acid chain: 2-aminoethylphosphonate--pyruvate transaminase (365 aa).

N6-(pyridoxal phosphate)lysine is present on Lys194.

This sequence belongs to the class-V pyridoxal-phosphate-dependent aminotransferase family. PhnW subfamily. Homodimer. Pyridoxal 5'-phosphate is required as a cofactor.

The enzyme catalyses (2-aminoethyl)phosphonate + pyruvate = phosphonoacetaldehyde + L-alanine. Its function is as follows. Involved in phosphonate degradation. In Bacillus cereus (strain G9842), this protein is 2-aminoethylphosphonate--pyruvate transaminase.